The sequence spans 610 residues: Elongation factor 4 (610 aa).

Residues 14 to 198 (ANIRNFSIVA…AIVTRLPPPQ (185 aa)) enclose the tr-type G domain. GTP contacts are provided by residues 26–31 (DHGKST) and 145–148 (NKVD).

The protein belongs to the TRAFAC class translation factor GTPase superfamily. Classic translation factor GTPase family. LepA subfamily.

Its subcellular location is the cell inner membrane. It carries out the reaction GTP + H2O = GDP + phosphate + H(+). Required for accurate and efficient protein synthesis under certain stress conditions. May act as a fidelity factor of the translation reaction, by catalyzing a one-codon backward translocation of tRNAs on improperly translocated ribosomes. Back-translocation proceeds from a post-translocation (POST) complex to a pre-translocation (PRE) complex, thus giving elongation factor G a second chance to translocate the tRNAs correctly. Binds to ribosomes in a GTP-dependent manner. The polypeptide is Elongation factor 4 (Nitrobacter hamburgensis (strain DSM 10229 / NCIMB 13809 / X14)).